Reading from the N-terminus, the 101-residue chain is MISVGHYLAVSAVLFTLGVLGIFINRKNIIVILMAIELILLAVNINLVAFSAALGDLVGQVFSMFVLTVAAGEAAIGLAILVIYFRGRGTIAVDDANRMKG.

A run of 3 helical transmembrane segments spans residues 4 to 24 (VGHY…GIFI), 29 to 49 (IIVI…NLVA), and 65 to 85 (FVLT…VIYF).

It belongs to the complex I subunit 4L family. NDH-1 is composed of 14 different subunits. Subunits NuoA, H, J, K, L, M, N constitute the membrane sector of the complex.

The protein localises to the cell inner membrane. It carries out the reaction a quinone + NADH + 5 H(+)(in) = a quinol + NAD(+) + 4 H(+)(out). Functionally, NDH-1 shuttles electrons from NADH, via FMN and iron-sulfur (Fe-S) centers, to quinones in the respiratory chain. The immediate electron acceptor for the enzyme in this species is believed to be ubiquinone. Couples the redox reaction to proton translocation (for every two electrons transferred, four hydrogen ions are translocated across the cytoplasmic membrane), and thus conserves the redox energy in a proton gradient. This Sphingopyxis alaskensis (strain DSM 13593 / LMG 18877 / RB2256) (Sphingomonas alaskensis) protein is NADH-quinone oxidoreductase subunit K.